The sequence spans 566 residues: Intracellular exo-alpha-(1-&gt;5)-L-arabinofuranosidase (566 aa).

A compositionally biased stretch (polar residues) spans 1-12; it reads MTTHNSQYSAET. Residues 1 to 39 form a disordered region; the sequence is MTTHNSQYSAETTHPDKQESSPAPTAAGTTASNVSTTGN. Residues 20–32 are compositionally biased toward low complexity; it reads SSPAPTAAGTTAS. 3 residues coordinate alpha-L-arabinofuranose: E69, N114, and N214. The active-site Proton donor/acceptor is E215. Alpha-L-arabinofuranose is bound by residues Y286, E340, and Q409. E340 functions as the Nucleophile in the catalytic mechanism.

The protein belongs to the glycosyl hydrolase 51 family. As to quaternary structure, homohexamer; trimer of dimers.

Its subcellular location is the cytoplasm. It catalyses the reaction Hydrolysis of terminal non-reducing alpha-L-arabinofuranoside residues in alpha-L-arabinosides.. Its pathway is glycan metabolism; L-arabinan degradation. Completely inhibited by Hg(2+) and Cu(2+) ions, whereas 1 mM Zn(2+) inhibited activity by 51%. Its function is as follows. Involved in the degradation of arabinan and is a key enzyme in the complete degradation of the plant cell wall. Catalyzes the cleavage of terminal alpha-(1-&gt;5)-arabinofuranosyl bonds in different hemicellulosic homopolysaccharides (branched and debranched arabinans). It is active with sugar beet arabinan and wheat arabinoxylan. It also exhibited activity against alpha-(1-&gt;5)-linked arabinobiose, arabinotriose, arabinotetraose, and arabinopentaose. The polypeptide is Intracellular exo-alpha-(1-&gt;5)-L-arabinofuranosidase (abfB) (Bifidobacterium longum).